Reading from the N-terminus, the 1078-residue chain is Protein U90 (1078 aa).

Over residues 1–12 (MESAKDTTSTSM) the composition is skewed to polar residues. 4 disordered regions span residues 1–28 (MESA…SNEE), 464–483 (SPTD…PTRQ), 703–732 (HMNN…DHKT), and 781–818 (ESED…DCTS).

This Homo sapiens (Human) protein is Protein U90 (U90).